The sequence spans 344 residues: MSRSGAMDLASGLGGKITKDEVKSAVDEYEKYHGYYGGKEEARKSNYTDMVNKYYDLATSFYEYGWGESFHFAHRWNGESLRESIKRHEHFLALQLGVKPGMKVLDVGCGIGGPLREIAKFSLASVTGLNNNEYQITRGKELNRVAGVSGTCDFVKADFMKMPFSDNTFDAVYAIEATCHAPDPVGCYKEIYRVLKPGQCFAVYEWCITDHYEPNNATHKRIKDEIELGNGLPDIRSTQQCLQAAKDAGFEVIWDKDLAEDSPVPWYLPLDPSRFSLSSFRLTTVGRAITRTMVKALEYVGLAPQGSERVSNFLEKAAEGLVEGGKKEIFTPMYFFLVRKPISE.

Belongs to the class I-like SAM-binding methyltransferase superfamily. Erg6/SMT family.

The catalysed reaction is zymosterol + S-adenosyl-L-methionine = fecosterol + S-adenosyl-L-homocysteine + H(+). Its pathway is steroid biosynthesis; sterol biosynthesis. In terms of biological role, catalyzes the methyl transfer from S-adenosyl-methionine to the C-24 of cycloartenol to form 24-methylene cycloartenol. The polypeptide is Cycloartenol-C-24-methyltransferase 1 (Smt1-1) (Oryza sativa subsp. japonica (Rice)).